We begin with the raw amino-acid sequence, 134 residues long: Large ribosomal subunit protein uL16c (134 aa).

The segment at 1-22 (MLSPKRTRFRKQHRGRMKGISH) is disordered.

The protein belongs to the universal ribosomal protein uL16 family. Part of the 50S ribosomal subunit.

Its subcellular location is the plastid. It is found in the chloroplast. In Nicotiana tabacum (Common tobacco), this protein is Large ribosomal subunit protein uL16c.